The following is a 420-amino-acid chain: MLGVPFIDRWLSETFKPKTFDDAVDRLSYVTTATLLAFFSIMVSCKQYVGSAIQCWMPMEFKGGWEQYAEDYCFIQNTFFIPERSEIPGDVEDRQKAEIGYYQWVPIVLAIQAFMFYLPSWIWSSLYKQCGLDFPSVISEAEALRSQDSETRTKGVNKLVDFIGDILDTRSKNEYGRFYCYRFGKGLGSMTSMLYICIKLMYLANVFVQFIILNKFLGNETFLWGFHTFADLYAGREWQDSGVFPRVTLCDFSVRKLANVHRYTVQCVLMINMFNEKIYLFIWFWFVFVLITTFINTLCTIYRLSFDSSRHNYIRSLLSGPVNNFKDEKAMIASFANNGLKQDGVLLMRFIDDHAGAMVTKEICEELFKKHGENLQHNRDFHHGHSTKSTSPGLEEGHHEHLYTPEKMKLMAPDYPIKHA.

4 consecutive transmembrane segments (helical) span residues 33–53 (ATLLAFFSIMVSCKQYVGSAI), 104–124 (WVPIVLAIQAFMFYLPSWIWS), 193–213 (MLYICIKLMYLANVFVQFIIL), and 278–298 (IYLFIWFWFVFVLITTFINTL). The tract at residues 378 to 405 (NRDFHHGHSTKSTSPGLEEGHHEHLYTP) is disordered. Residues 395 to 405 (EEGHHEHLYTP) show a composition bias toward basic and acidic residues.

Belongs to the pannexin family. In terms of assembly, interacts with F-actin. As to expression, evenly distributed along the adjoining membranes of the two pm5 pharyngeal muscle cells.

It is found in the cell membrane. Its subcellular location is the cell junction. The protein resides in the gap junction. Structural component of gap junctions. Plays a role in maintaining gap junction activity to promote phayngeal muscle contraction. The polypeptide is Innexin-3 (Caenorhabditis elegans).